A 303-amino-acid polypeptide reads, in one-letter code: uncharacterized protein (303 aa).

This is an uncharacterized protein from Magallana gigas (Pacific oyster).